A 184-amino-acid chain; its full sequence is Protein Syd (184 aa).

Belongs to the Syd family.

The protein resides in the cell inner membrane. Interacts with the SecY protein in vivo. May bind preferentially to an uncomplexed state of SecY, thus functioning either as a chelating agent for excess SecY in the cell or as a regulatory factor that negatively controls the translocase function. This chain is Protein Syd, found in Photorhabdus laumondii subsp. laumondii (strain DSM 15139 / CIP 105565 / TT01) (Photorhabdus luminescens subsp. laumondii).